The chain runs to 134 residues: Transcription antitermination protein NusB (134 aa).

It belongs to the NusB family.

In terms of biological role, involved in transcription antitermination. Required for transcription of ribosomal RNA (rRNA) genes. Binds specifically to the boxA antiterminator sequence of the ribosomal RNA (rrn) operons. The chain is Transcription antitermination protein NusB from Shewanella baltica (strain OS223).